Reading from the N-terminus, the 556-residue chain is U-box domain-containing protein 38 (556 aa).

The disordered stretch occupies residues 1-34 (MGKNGRLRWNPFSHRSSSSTSSSSRQQQQEQQPP). The span at 13 to 32 (SHRSSSSTSSSSRQQQQEQQ) shows a compositional bias: low complexity. The U-box domain maps to 32–108 (QPPVEFLCPI…DTWCDTVGVS (77 aa)). ARM repeat units follow at residues 256-295 (DEAR…NLSL), 297-336 (KKNK…SLSL), 338-378 (DDNK…HLTL), 380-417 (QTNR…NLAC), and 418-468 (CSEG…ALSH).

In terms of assembly, binds to SD16, SD17, SD18 and SD129.

The enzyme catalyses S-ubiquitinyl-[E2 ubiquitin-conjugating enzyme]-L-cysteine + [acceptor protein]-L-lysine = [E2 ubiquitin-conjugating enzyme]-L-cysteine + N(6)-ubiquitinyl-[acceptor protein]-L-lysine.. Its pathway is protein modification; protein ubiquitination. In terms of biological role, functions as an E3 ubiquitin ligase. The polypeptide is U-box domain-containing protein 38 (PUB38) (Arabidopsis thaliana (Mouse-ear cress)).